A 454-amino-acid chain; its full sequence is Bifunctional protein GlmU (454 aa).

Positions 1–225 (MNIVILAAGM…LWETLGVNSK (225 aa)) are pyrophosphorylase. Residues 6-9 (LAAG), Lys20, Gln71, 76-77 (GT), 98-100 (YGD), Gly135, Glu150, Asn165, and Asn223 contribute to the UDP-N-acetyl-alpha-D-glucosamine site. Asp100 is a Mg(2+) binding site. Asn223 contacts Mg(2+). The tract at residues 226–246 (VQLAEVERIHQRNLAQRLLET) is linker. Residues 247–454 (GVTLADPARI…WQRPVKKAKQ (208 aa)) form an N-acetyltransferase region. 2 residues coordinate UDP-N-acetyl-alpha-D-glucosamine: Arg329 and Lys347. His359 acts as the Proton acceptor in catalysis. UDP-N-acetyl-alpha-D-glucosamine contacts are provided by Tyr362 and Asn373. Acetyl-CoA is bound by residues Ala376, 382–383 (NY), Ser401, Ala419, and Arg436.

This sequence in the N-terminal section; belongs to the N-acetylglucosamine-1-phosphate uridyltransferase family. It in the C-terminal section; belongs to the transferase hexapeptide repeat family. Homotrimer. It depends on Mg(2+) as a cofactor.

It is found in the cytoplasm. The catalysed reaction is alpha-D-glucosamine 1-phosphate + acetyl-CoA = N-acetyl-alpha-D-glucosamine 1-phosphate + CoA + H(+). It catalyses the reaction N-acetyl-alpha-D-glucosamine 1-phosphate + UTP + H(+) = UDP-N-acetyl-alpha-D-glucosamine + diphosphate. The protein operates within nucleotide-sugar biosynthesis; UDP-N-acetyl-alpha-D-glucosamine biosynthesis; N-acetyl-alpha-D-glucosamine 1-phosphate from alpha-D-glucosamine 6-phosphate (route II): step 2/2. It participates in nucleotide-sugar biosynthesis; UDP-N-acetyl-alpha-D-glucosamine biosynthesis; UDP-N-acetyl-alpha-D-glucosamine from N-acetyl-alpha-D-glucosamine 1-phosphate: step 1/1. It functions in the pathway bacterial outer membrane biogenesis; LPS lipid A biosynthesis. Catalyzes the last two sequential reactions in the de novo biosynthetic pathway for UDP-N-acetylglucosamine (UDP-GlcNAc). The C-terminal domain catalyzes the transfer of acetyl group from acetyl coenzyme A to glucosamine-1-phosphate (GlcN-1-P) to produce N-acetylglucosamine-1-phosphate (GlcNAc-1-P), which is converted into UDP-GlcNAc by the transfer of uridine 5-monophosphate (from uridine 5-triphosphate), a reaction catalyzed by the N-terminal domain. This Cupriavidus pinatubonensis (strain JMP 134 / LMG 1197) (Cupriavidus necator (strain JMP 134)) protein is Bifunctional protein GlmU.